Consider the following 251-residue polypeptide: tRNA1(Val) (adenine(37)-N6)-methyltransferase (251 aa).

This sequence belongs to the methyltransferase superfamily. tRNA (adenine-N(6)-)-methyltransferase family.

It is found in the cytoplasm. It carries out the reaction adenosine(37) in tRNA1(Val) + S-adenosyl-L-methionine = N(6)-methyladenosine(37) in tRNA1(Val) + S-adenosyl-L-homocysteine + H(+). Functionally, specifically methylates the adenine in position 37 of tRNA(1)(Val) (anticodon cmo5UAC). This chain is tRNA1(Val) (adenine(37)-N6)-methyltransferase, found in Yersinia enterocolitica serotype O:8 / biotype 1B (strain NCTC 13174 / 8081).